The following is an 82-amino-acid chain: Small ribosomal subunit protein bS20 (82 aa).

Basic residues predominate over residues 1 to 11 (MANHKSALKRI). Positions 1–20 (MANHKSALKRIRSNETKRLR) are disordered.

The protein belongs to the bacterial ribosomal protein bS20 family.

Binds directly to 16S ribosomal RNA. The protein is Small ribosomal subunit protein bS20 of Christiangramia forsetii (strain DSM 17595 / CGMCC 1.15422 / KT0803) (Gramella forsetii).